We begin with the raw amino-acid sequence, 298 residues long: UDP-N-acetylenolpyruvoylglucosamine reductase (298 aa).

One can recognise an FAD-binding PCMH-type domain in the interval 27 to 191 (TGGNADVFVM…LDATFSLELE (165 aa)). The active site involves R170. Catalysis depends on S220, which acts as the Proton donor. E290 is an active-site residue.

Belongs to the MurB family. It depends on FAD as a cofactor.

The protein localises to the cytoplasm. It carries out the reaction UDP-N-acetyl-alpha-D-muramate + NADP(+) = UDP-N-acetyl-3-O-(1-carboxyvinyl)-alpha-D-glucosamine + NADPH + H(+). It functions in the pathway cell wall biogenesis; peptidoglycan biosynthesis. Cell wall formation. The chain is UDP-N-acetylenolpyruvoylglucosamine reductase from Listeria innocua serovar 6a (strain ATCC BAA-680 / CLIP 11262).